The chain runs to 1544 residues: MEAATTLHPGPRPALPLGGPGPLGEFLPPPECPVFEPSWEEFADPFAFIHKIRPIAEQTGICKVRPPPDWQPPFACDVDKLHFTPRIQRLNELEAQTRVKLNFLDQIAKYWELQGSTLKIPHVERKILDLFQLNKLVAEEGGFAVVCKDRKWTKIATKMGFAPGKAVGSHIRGHYERILNPYNLFLSGDSLRCLQKPNLTTDTKDKEYKPHDIPQRQSVQPSETCPPARRAKRMRAEAMNIKIEPEETTEARTHNLRRRMGCPTPKCENEKEMKSSIKQEPIERKDYIVENEKEKPKSRSKKATNAVDLYVCLLCGSGNDEDRLLLCDGCDDSYHTFCLIPPLHDVPKGDWRCPKCLAQECSKPQEAFGFEQAARDYTLRTFGEMADAFKSDYFNMPVHMVPTELVEKEFWRLVSTIEEDVTVEYGADIASKEFGSGFPVRDGKIKLSPEEEEYLDSGWNLNNMPVMEQSVLAHITADICGMKLPWLYVGMCFSSFCWHIEDHWSYSINYLHWGEPKTWYGVPGYAAEQLENVMKKLAPELFVSQPDLLHQLVTIMNPNTLMTHEVPVYRTNQCAGEFVITFPRAYHSGFNQGFNFAEAVNFCTVDWLPLGRQCVEHYRLLHRYCVFSHDEMICKMASKADVLDVVVASTVQKDMAIMIEDEKALRETVRKLGVIDSERMDFELLPDDERQCVKCKTTCFMSAISCSCKPGLLVCLHHVKELCSCPPYKYKLRYRYTLDDLYPMMNALKLRAESYNEWALNVNEALEAKINKKKSLVSFKALIEESEMKKFPDNDLLRHLRLVTQDAEKCASVAQQLLNGKRQTRYRSGGGKSQNQLTVNELRQFVTQLYALPCVLSQTPLLKDLLNRVEDFQQHSQKLLSEETPSAAELQDLLDVSFEFDVELPQLAEMRIRLEQARWLEEVQQACLDPSSLTLDDMRRLIDLGVGLAPYSAVEKAMARLQELLTVSEHWDDKAKSLLKARPRHSLNSLATAVKEIEEIPAYLPNGAALKDSVQRARDWLQDVEGLQAGGRVPVLDTLIELVTRGRSIPVHLNSLPRLETLVAEVQAWKECAVNTFLTENSPYSLLEVLCPRCDIGLLGLKRKQRKLKEPLPNGKKKSTKLESLSDLERALTESKETASAMATLGEARLREMEALQSLRLANEGKLLSPLQDVDIKICLCQKAPAAPMIQCELCRDAFHTSCVAVPSISQGLRIWLCPHCRRSEKPPLEKILPLLASLQRIRVRLPEGDALRYMIERTVNWQHRAQQLLSSGNLKFVQDRVGSGLLYSRWQASAGQVSDTNKVSQPPGTTSFSLPDDWDNRTSYLHSPFSTGRSCIPLHGVSPEVNELLMEAQLLQVSLPEIQELYQTLLAKPSPAQQTDRSSPVRPSSEKNDCCRGKRDGINSLERKLKRRLEREGLSSERWERVKKMRTPKKKKIKLSHPKDMNNFKLERERSYELVRSAETHSLPSDTSYSEQEDSEDEDAICPAVSCLQPEGDEVDWVQCDGSCNQWFHQVCVGVSPEMAEKEDYICVRCTVKDAPSRK.

Residues 32-73 enclose the JmjN domain; that stretch reads CPVFEPSWEEFADPFAFIHKIRPIAEQTGICKVRPPPDWQPP. The 91-residue stretch at 97–187 folds into the ARID domain; the sequence is TRVKLNFLDQ…ILNPYNLFLS (91 aa). Glycyl lysine isopeptide (Lys-Gly) (interchain with G-Cter in SUMO2) cross-links involve residues Lys-148, Lys-204, Lys-209, Lys-242, Lys-274, and Lys-278. Residues 201 to 230 form a disordered region; it reads TDTKDKEYKPHDIPQRQSVQPSETCPPARR. The span at 202–214 shows a compositional bias: basic and acidic residues; the sequence is DTKDKEYKPHDIP. Residues 309–359 form a PHD-type 1 zinc finger; it reads LYVCLLCGSGNDEDRLLLCDGCDDSYHTFCLIPPLHDVPKGDWRCPKCLAQ. Tyr-425 is a 2-oxoglutarate binding site. The region spanning 453 to 619 is the JmjC domain; it reads EYLDSGWNLN…LGRQCVEHYR (167 aa). Positions 499 and 501 each coordinate Fe cation. 3 residues coordinate 2-oxoglutarate: Ser-507, Asn-509, and Lys-517. His-587 is a binding site for Fe cation. The C5HC2 zinc-finger motif lies at 692–744; that stretch reads CVKCKTTCFMSAISCSCKPGLLVCLHHVKELCSCPPYKYKLRYRYTLDDLYPM. Residue Lys-769 forms a Glycyl lysine isopeptide (Lys-Gly) (interchain with G-Cter in SUMO2) linkage. An N6-acetyllysine modification is found at Lys-832. Ser-986 is modified (phosphoserine). A PHD-type 2 zinc finger spans residues 1176–1224; that stretch reads IKICLCQKAPAAPMIQCELCRDAFHTSCVAVPSISQGLRIWLCPHCRRS. Ser-1328 is modified (phosphoserine). Positions 1374–1400 are disordered; the sequence is PSPAQQTDRSSPVRPSSEKNDCCRGKR. Over residues 1376–1387 the composition is skewed to polar residues; it reads PAQQTDRSSPVR. A compositionally biased stretch (basic and acidic residues) spans 1389–1400; it reads SSEKNDCCRGKR. Lys-1450 participates in a covalent cross-link: Glycyl lysine isopeptide (Lys-Gly) (interchain with G-Cter in SUMO2). A Phosphoserine modification is found at Ser-1456. The PHD-type 3 zinc finger occupies 1484-1538; that stretch reads DAICPAVSCLQPEGDEVDWVQCDGSCNQWFHQVCVGVSPEMAEKEDYICVRCTVK.

This sequence belongs to the JARID1 histone demethylase family. Interacts with FOXG1B, PAX9, MYC, MYCN and RB1. Interacts with HDAC1, HDAC4, HDAC5 and HDAC7. Interacts (via PHD-type 1 zinc finger) with histone H3 unmodified at 'Lys-4'; the interaction is inhibited when histone H3 is methylated at 'Arg-2' or 'Lys-4'. Fe(2+) is required as a cofactor. Ubiquitously expressed, with highest levels in testis. Down-regulated in melanoma and glioblastoma. Up-regulated in breast cancer (at protein level).

It is found in the nucleus. It catalyses the reaction N(6),N(6),N(6)-trimethyl-L-lysyl(4)-[histone H3] + 3 2-oxoglutarate + 3 O2 = L-lysyl(4)-[histone H3] + 3 formaldehyde + 3 succinate + 3 CO2. With respect to regulation, several specific inhibitors are being developed and tested. The inhibitor KDOAM-25 inhibits its demethylase activity, resulting to cell cycle arrest in myeloma cells. Histone demethylase that demethylates 'Lys-4' of histone H3, thereby playing a central role in histone code. Does not demethylate histone H3 'Lys-9' or H3 'Lys-27'. Demethylates trimethylated, dimethylated and monomethylated H3 'Lys-4'. Acts as a transcriptional corepressor for FOXG1B and PAX9. Favors the proliferation of breast cancer cells by repressing tumor suppressor genes such as BRCA1 and HOXA5. In contrast, may act as a tumor suppressor for melanoma. Represses the CLOCK-BMAL1 heterodimer-mediated transcriptional activation of the core clock component PER2. The sequence is that of Lysine-specific demethylase 5B (KDM5B) from Homo sapiens (Human).